The primary structure comprises 562 residues: Protein wntless (562 aa).

The Cytoplasmic portion of the chain corresponds to 1–13 (MSGTILENLSGRK). Residues 14–34 (LSILVATLLLCQVLCFLLGGL) traverse the membrane as a helical segment. Topologically, residues 35 to 239 (YAPLPAGHVT…AIHQNGGFTQ (205 aa)) are lumenal. Residue Asn58 is glycosylated (N-linked (GlcNAc...) asparagine). The helical transmembrane segment at 240–260 (IWLLLKTMLFPFVVGIMIWFW) threads the bilayer. Residues 261–270 (RRVHLLQRSP) lie on the Cytoplasmic side of the membrane. Residues 271-291 (ALLEYMLIYLGAALTFLNLPL) form a helical membrane-spanning segment. At 292–311 (EYLSLVYEMPYMLLLSDIRQ) the chain is on the lumenal side. A helical membrane pass occupies residues 312–332 (GIFYAMLLTFWLVFAGEHMLI). Topologically, residues 333 to 344 (QDAPNKSTIRSR) are cytoplasmic. The helical transmembrane segment at 345-365 (YWKHLSAVVVGCISLFVFDIC) threads the bilayer. At 366–390 (ERGVQLRNPFYSIWTTPLGAKVAMT) the chain is on the lumenal side. A helical membrane pass occupies residues 391–411 (FIVLAGVSAAIYFLFLCYMIW). Over 412–441 (KVFRNIGDKRTSLPSMSQARRLHYEGLIYR) the chain is Cytoplasmic. The chain crosses the membrane as a helical span at residues 442–462 (FKFLMLATLVCAALTVAGFIM). The Lumenal segment spans residues 463-482 (GQMAEGQWDWNDNVAIQPTS). Residues 483–503 (AFLTGVYGMWNIYIFALLILY) traverse the membrane as a helical segment. Residues 504 to 562 (APSHKQWPAMHHSDETTQSNENIVASAASEEIEFSHLPSDSNPSEISSLTSFTRKVAFD) lie on the Cytoplasmic side of the membrane.

It belongs to the wntless family. Interacts with wg; in the Golgi. Interacts with Vps35, a component of the retromer complex; wls stability is regulated by Vps35.

It localises to the presynaptic cell membrane. The protein localises to the postsynaptic cell membrane. Its subcellular location is the cell membrane. It is found in the endoplasmic reticulum membrane. The protein resides in the endosome membrane. It localises to the golgi apparatus membrane. Its function is as follows. A segment polarity gene required for wingless (wg)-dependent patterning processes, acting in both wg-sending cells and wg-target cells. In non-neuronal cells wls directs wg secretion. The wls traffic loop encompasses the Golgi, the cell surface, an endocytic compartment and a retrograde route leading back to the Golgi, and involves clathrin-mediated endocytosis and the retromer complex (a conserved protein complex consisting of Vps35 and Vps26). In neuronal cells (the larval motorneuron NMJ), the wg signal moves across the synapse via the release of wls-containing exosome-like vesicles. Postsynaptic wls is required for the trafficking of fz2 through the fz2-interacting protein Grip. The sequence is that of Protein wntless from Drosophila sechellia (Fruit fly).